The sequence spans 455 residues: Chromosomal replication initiator protein DnaA 2 (455 aa).

The interval 1–95 (MLTCNDCSTW…KRSSPQIAAS (95 aa)) is domain I, interacts with DnaA modulators. The interval 96-112 (VTKPAVEVSEENKDFQL) is domain II. The tract at residues 113-328 (KLNGAYRFDN…GAINKLTAYC (216 aa)) is domain III, AAA+ region. ATP-binding residues include glycine 157, glycine 159, lysine 160, and threonine 161. Residues 329 to 455 (LLFNKPLTET…IAIDSPQHFV (127 aa)) form a domain IV, binds dsDNA region.

The protein belongs to the DnaA family. In terms of assembly, oligomerizes as a right-handed, spiral filament on DNA at oriC.

It is found in the cytoplasm. Plays an essential role in the initiation and regulation of chromosomal replication. ATP-DnaA binds to the origin of replication (oriC) to initiate formation of the DNA replication initiation complex once per cell cycle. Binds the DnaA box (a 9 base pair repeat at the origin) and separates the double-stranded (ds)DNA. Forms a right-handed helical filament on oriC DNA; dsDNA binds to the exterior of the filament while single-stranded (ss)DNA is stabiized in the filament's interior. The ATP-DnaA-oriC complex binds and stabilizes one strand of the AT-rich DNA unwinding element (DUE), permitting loading of DNA polymerase. After initiation quickly degrades to an ADP-DnaA complex that is not apt for DNA replication. Binds acidic phospholipids. The polypeptide is Chromosomal replication initiator protein DnaA 2 (Chlamydia muridarum (strain MoPn / Nigg)).